The primary structure comprises 60 residues: Arabinogalactan protein 14 (60 aa).

A signal peptide spans M1–A28. 4-hydroxyproline is present on residues P32, P34, and P36. P32, P34, and P36 each carry an O-linked (Ara...) hydroxyproline glycan. S38 carries GPI-anchor amidated serine lipidation. The propeptide at D39–F60 is removed in mature form.

The protein belongs to the AG-peptide AGP family. Post-translationally, contains 4-hydroxyproline; hydroxylated on Pro-32, Pro-34 and Pro-36. O-glycosylated on hydroxyprolines; noncontiguous hydroxylproline residues are glycosylated with arabinogalactan.

The protein localises to the cell membrane. Proteoglycan that seems to be implicated in diverse developmental roles such as differentiation, cell-cell recognition, embryogenesis and programmed cell death. Involved in the regulation of root hair elongation. This is Arabinogalactan protein 14 from Arabidopsis thaliana (Mouse-ear cress).